An 80-amino-acid chain; its full sequence is Exodeoxyribonuclease 7 small subunit (80 aa).

A disordered region spans residues 60–80 (LIDSDGTEHNLDPNNASAPEE). The span at 61–70 (IDSDGTEHNL) shows a compositional bias: basic and acidic residues. The span at 71 to 80 (DPNNASAPEE) shows a compositional bias: polar residues.

The protein belongs to the XseB family. As to quaternary structure, heterooligomer composed of large and small subunits.

Its subcellular location is the cytoplasm. It carries out the reaction Exonucleolytic cleavage in either 5'- to 3'- or 3'- to 5'-direction to yield nucleoside 5'-phosphates.. In terms of biological role, bidirectionally degrades single-stranded DNA into large acid-insoluble oligonucleotides, which are then degraded further into small acid-soluble oligonucleotides. The protein is Exodeoxyribonuclease 7 small subunit of Lactobacillus acidophilus (strain ATCC 700396 / NCK56 / N2 / NCFM).